The chain runs to 248 residues: UPF0736 protein BcerKBAB4_1085 (248 aa).

The protein belongs to the UPF0736 family.

The protein is UPF0736 protein BcerKBAB4_1085 of Bacillus mycoides (strain KBAB4) (Bacillus weihenstephanensis).